We begin with the raw amino-acid sequence, 373 residues long: Flagellar P-ring protein (373 aa).

The N-terminal stretch at 1-26 (MKLFFRIVTLVAVVAMSLADMAPAWA) is a signal peptide.

The protein belongs to the FlgI family. The basal body constitutes a major portion of the flagellar organelle and consists of four rings (L,P,S, and M) mounted on a central rod.

It is found in the periplasm. The protein localises to the bacterial flagellum basal body. Assembles around the rod to form the L-ring and probably protects the motor/basal body from shearing forces during rotation. This is Flagellar P-ring protein from Rhizobium etli (strain ATCC 51251 / DSM 11541 / JCM 21823 / NBRC 15573 / CFN 42).